The following is a 385-amino-acid chain: Acetate kinase (385 aa).

A Mg(2+)-binding site is contributed by asparagine 9. Lysine 16 contributes to the ATP binding site. Arginine 87 serves as a coordination point for substrate. Catalysis depends on aspartate 144, which acts as the Proton donor/acceptor. ATP-binding positions include 202-206 and 277-279; these read HLGSG and DMR. Residue glutamate 373 participates in Mg(2+) binding.

This sequence belongs to the acetokinase family. Homodimer. It depends on Mg(2+) as a cofactor. Mn(2+) serves as cofactor.

It is found in the cytoplasm. The catalysed reaction is acetate + ATP = acetyl phosphate + ADP. Its pathway is metabolic intermediate biosynthesis; acetyl-CoA biosynthesis; acetyl-CoA from acetate: step 1/2. Functionally, catalyzes the formation of acetyl phosphate from acetate and ATP. Can also catalyze the reverse reaction. This is Acetate kinase from Rickettsia felis (strain ATCC VR-1525 / URRWXCal2) (Rickettsia azadi).